The following is a 67-amino-acid chain: Large ribosomal subunit protein uL29 (67 aa).

This sequence belongs to the universal ribosomal protein uL29 family.

This Gemmatimonas aurantiaca (strain DSM 14586 / JCM 11422 / NBRC 100505 / T-27) protein is Large ribosomal subunit protein uL29.